The sequence spans 338 residues: Ankyrin-repeat domain containing transcription coregulator asaA (338 aa).

A compositionally biased stretch (basic and acidic residues) spans 1 to 10 (MGAPHEEIQA). Disordered regions lie at residues 1–70 (MGAP…LRST) and 112–137 (ASSV…PFID). A compositionally biased stretch (basic residues) spans 11-33 (LKRRREQNRLAQRRRRDNVRRRL). The segment covering 42–70 (SPASASQTSLCSSTDSRVTLNPHQSLRST) has biased composition (polar residues). A compositionally biased stretch (low complexity) spans 112-130 (ASSVSPSSSAGPLSSSPSP). ANK repeat units lie at residues 235-264 (RWTT…DPNA), 268-297 (EGAT…DPTL), and 301-330 (AGWL…PVDY).

The protein operates within secondary metabolite biosynthesis. Functionally, transcription coregulator involved in regulation of gene cluster that mediates the biosynthesis of aspergillic acid, a hydroxamic acid-containing pyrazinone with aliphatic side chains that originates from leucine (Leu) and isoleucine (Ile). Aspergillic acid has antibiotic properties and was shown to be lethal to mice. This is Ankyrin-repeat domain containing transcription coregulator asaA from Aspergillus flavus (strain ATCC 200026 / FGSC A1120 / IAM 13836 / NRRL 3357 / JCM 12722 / SRRC 167).